The chain runs to 554 residues: Protein translocase subunit SecD (554 aa).

A run of 6 helical transmembrane segments spans residues 10 to 30 (LVILGLCLAALITAAPNMFYA), 392 to 412 (AGMVASVIGFVAVVAYMIASY), 414 to 434 (LFGFFSSVALFINIAFIFAVM), 435 to 455 (GAIGGTMTLPGIAGIVLTIGT), 491 to 511 (AIIDANVTSFLSSAILFVLGA), and 516 to 536 (GFAVTTMIGIAASIFTAIWVV).

The protein belongs to the SecD/SecF family. SecD subfamily. Forms a complex with SecF. Part of the essential Sec protein translocation apparatus which comprises SecA, SecYEG and auxiliary proteins SecDF-YajC and YidC.

It is found in the cell inner membrane. Its function is as follows. Part of the Sec protein translocase complex. Interacts with the SecYEG preprotein conducting channel. SecDF uses the proton motive force (PMF) to complete protein translocation after the ATP-dependent function of SecA. In Rhodobacter capsulatus (strain ATCC BAA-309 / NBRC 16581 / SB1003), this protein is Protein translocase subunit SecD.